A 449-amino-acid chain; its full sequence is Xaa-Pro dipeptidase (449 aa).

The Mn(2+) site is built by D246, D257, H345, E390, and E429.

It belongs to the peptidase M24B family. Bacterial-type prolidase subfamily. Requires Mn(2+) as cofactor.

It carries out the reaction Xaa-L-Pro dipeptide + H2O = an L-alpha-amino acid + L-proline. Functionally, splits dipeptides with a prolyl residue in the C-terminal position. This chain is Xaa-Pro dipeptidase, found in Yersinia enterocolitica serotype O:8 / biotype 1B (strain NCTC 13174 / 8081).